Reading from the N-terminus, the 573-residue chain is ATP-dependent RNA helicase RhlB (573 aa).

The short motif at 9 to 37 is the Q motif element; the sequence is LTFSSFDLHPALVAGLESAGFTRCTPIQA. Residues 40 to 220 form the Helicase ATP-binding domain; that stretch reads LPVALPGGDV…YEHMNEPEKL (181 aa). 53 to 60 lines the ATP pocket; sequence AQTGTGKT. The DEAD box signature appears at 166 to 169; the sequence is DEAD. The 163-residue stretch at 231 to 393 folds into the Helicase C-terminal domain; it reads RVRQRIYFPS…PVTTELLTPL (163 aa). Over residues 391-400 the composition is skewed to low complexity; sequence TPLPRTPRAT. The interval 391 to 559 is disordered; it reads TPLPRTPRAT…AKPSGSPSLL (169 aa). The span at 402–411 shows a compositional bias: acidic residues; it reads EGEEVDDDAG. The span at 419 to 432 shows a compositional bias: basic and acidic residues; the sequence is REAREQRAADEARR. Residues 435–449 show a composition bias toward gly residues; sequence GRSGPGGASRSGSGG. Positions 450–461 are enriched in basic and acidic residues; the sequence is GRRDGAGADGKP. The span at 476–499 shows a compositional bias: low complexity; that stretch reads PAAAPSETPVVVAAAAETPAVTAA. Basic residues predominate over residues 505–514; that stretch reads PRKRRRRRNG. 2 stretches are compositionally biased toward low complexity: residues 516–528 and 541–559; these read PVEG…ASTP and VVAK…PSLL.

Belongs to the DEAD box helicase family. RhlB subfamily. Component of the RNA degradosome, which is a multiprotein complex involved in RNA processing and mRNA degradation.

Its subcellular location is the cytoplasm. The enzyme catalyses ATP + H2O = ADP + phosphate + H(+). In terms of biological role, DEAD-box RNA helicase involved in RNA degradation. Has RNA-dependent ATPase activity and unwinds double-stranded RNA. The chain is ATP-dependent RNA helicase RhlB from Xanthomonas campestris pv. campestris (strain B100).